A 356-amino-acid polypeptide reads, in one-letter code: Protein ATP1B4 (356 aa).

At 1–109 (MRRQLRSRRA…SLARTGQSRS (109 aa)) the chain is on the nuclear side. The interval 26 to 78 (EANHNYLADEEEEAEEEAQVMMVPGLEEEEEEEEGKEEEEEREEEEGQGQSTG) is disordered. Acidic residues-rich tracts occupy residues 33–43 (ADEEEEAEEEA) and 51–72 (LEEEEEEEEGKEEEEEREEEEG). A helical; Signal-anchor for type II membrane protein transmembrane segment spans residues 110–130 (LILVIYFFFYASLAAVITLFI). The Perinuclear space portion of the chain corresponds to 131–356 (YMLFLAISPY…RIIFTLNIET (226 aa)).

The protein belongs to the X(+)/potassium ATPases subunit beta family. Associates with a SMAD7-transcriptional complex. Interacts with TOR1AIP1. Does not associate with known Na,K-ATPase alpha-subunits. Interacts with SNW1. In terms of tissue distribution, expressed in skeletal muscle (at protein level). Expressed during postnatal development in skeletal muscle and heart.

It is found in the nucleus inner membrane. In terms of biological role, may act as a transcriptional coregulator during muscle development through its interaction with SNW1. Has lost its ancestral function as a Na,K-ATPase beta-subunit. In Mus musculus (Mouse), this protein is Protein ATP1B4 (Atp1b4).